Here is a 435-residue protein sequence, read N- to C-terminus: Adenylosuccinate synthetase (435 aa).

GTP contacts are provided by residues 11-17 (GDEGKGK) and 39-41 (GHT). The active-site Proton acceptor is Asp12. Mg(2+)-binding residues include Asp12 and Gly39. IMP contacts are provided by residues 12-15 (DEGK), 37-40 (NAGH), Thr128, Arg142, Gln223, Thr238, and Arg302. His40 (proton donor) is an active-site residue. Residue 298–304 (SVTGRPR) participates in substrate binding. Residues Arg304, 330-332 (KLD), and 412-414 (STG) each bind GTP.

This sequence belongs to the adenylosuccinate synthetase family. Homodimer. It depends on Mg(2+) as a cofactor.

It localises to the cytoplasm. It carries out the reaction IMP + L-aspartate + GTP = N(6)-(1,2-dicarboxyethyl)-AMP + GDP + phosphate + 2 H(+). Its pathway is purine metabolism; AMP biosynthesis via de novo pathway; AMP from IMP: step 1/2. Functionally, plays an important role in the de novo pathway of purine nucleotide biosynthesis. Catalyzes the first committed step in the biosynthesis of AMP from IMP. This chain is Adenylosuccinate synthetase, found in Coxiella burnetii (strain RSA 331 / Henzerling II).